Here is a 263-residue protein sequence, read N- to C-terminus: Undecaprenyl-diphosphatase (263 aa).

Transmembrane regions (helical) follow at residues 40 to 60, 87 to 107, 109 to 129, 186 to 206, 219 to 239, and 243 to 263; these read PGVLFDVLLHAGTMAAVLVYF, LLIIATVPTAIIGLSFKDFFV, AFHNLPLISLMLVVTGGLLFF, FSFLMALPAVFGATLVSLLEW, AGAVMAFLSGLASIHLLMGVV, and RLYAFAVYCWLMGGMFFAISS.

Belongs to the UppP family.

The protein localises to the cell inner membrane. It carries out the reaction di-trans,octa-cis-undecaprenyl diphosphate + H2O = di-trans,octa-cis-undecaprenyl phosphate + phosphate + H(+). Catalyzes the dephosphorylation of undecaprenyl diphosphate (UPP). Confers resistance to bacitracin. This Syntrophotalea carbinolica (strain DSM 2380 / NBRC 103641 / GraBd1) (Pelobacter carbinolicus) protein is Undecaprenyl-diphosphatase.